Reading from the N-terminus, the 409-residue chain is Multifunctional CCA protein (409 aa).

ATP-binding residues include G8 and R11. Residues G8 and R11 each contribute to the CTP site. Mg(2+) is bound by residues D21 and D23. The ATP site is built by R91, R137, and R140. CTP is bound by residues R91, R137, and R140. The 102-residue stretch at 228–329 (SGLHTLSVLE…LELLQSFDVY (102 aa)) folds into the HD domain.

Belongs to the tRNA nucleotidyltransferase/poly(A) polymerase family. Bacterial CCA-adding enzyme type 1 subfamily. Monomer. Can also form homodimers and oligomers. Mg(2+) is required as a cofactor. Requires Ni(2+) as cofactor.

The enzyme catalyses a tRNA precursor + 2 CTP + ATP = a tRNA with a 3' CCA end + 3 diphosphate. It catalyses the reaction a tRNA with a 3' CCA end + 2 CTP + ATP = a tRNA with a 3' CCACCA end + 3 diphosphate. Functionally, catalyzes the addition and repair of the essential 3'-terminal CCA sequence in tRNAs without using a nucleic acid template. Adds these three nucleotides in the order of C, C, and A to the tRNA nucleotide-73, using CTP and ATP as substrates and producing inorganic pyrophosphate. tRNA 3'-terminal CCA addition is required both for tRNA processing and repair. Also involved in tRNA surveillance by mediating tandem CCA addition to generate a CCACCA at the 3' terminus of unstable tRNAs. While stable tRNAs receive only 3'-terminal CCA, unstable tRNAs are marked with CCACCA and rapidly degraded. In Pseudomonas fluorescens (strain Pf0-1), this protein is Multifunctional CCA protein.